The primary structure comprises 267 residues: Tryptophan synthase alpha chain (267 aa).

Active-site proton acceptor residues include Glu-43 and Asp-54.

It belongs to the TrpA family. Tetramer of two alpha and two beta chains.

It catalyses the reaction (1S,2R)-1-C-(indol-3-yl)glycerol 3-phosphate + L-serine = D-glyceraldehyde 3-phosphate + L-tryptophan + H2O. Its pathway is amino-acid biosynthesis; L-tryptophan biosynthesis; L-tryptophan from chorismate: step 5/5. The alpha subunit is responsible for the aldol cleavage of indoleglycerol phosphate to indole and glyceraldehyde 3-phosphate. The protein is Tryptophan synthase alpha chain of Bacillus pumilus (strain SAFR-032).